The chain runs to 159 residues: Phosphodiesterase delta-like protein (159 aa).

This sequence belongs to the PDE6D/unc-119 family.

The protein is Phosphodiesterase delta-like protein (pdl-1) of Caenorhabditis elegans.